Reading from the N-terminus, the 218-residue chain is Lactosylceramide 4-alpha-galactosyltransferase (218 aa).

The short motif at 57–59 is the DXD motif element; it reads DTD.

It belongs to the glycosyltransferase 32 family.

The protein localises to the golgi apparatus membrane. It carries out the reaction a beta-D-Gal-(1-&gt;4)-beta-D-Glc-(1&lt;-&gt;1)-Cer(d18:1(4E)) + UDP-alpha-D-galactose = a globoside Gb3Cer (d18:1(4E)) + UDP + H(+). The catalysed reaction is a beta-D-Gal-(1&lt;-&gt;1')-ceramide + UDP-alpha-D-galactose = alpha-D-Gal-(1-&gt;4)-beta-D-Gal-(1&lt;-&gt;1')-Cer + UDP + H(+). Its pathway is glycolipid biosynthesis. Its function is as follows. Catalyzes the transfer of galactose from UDP-alpha-D-galactose to lactosylceramide/beta-D-galactosyl-(1-&gt;4)-beta-D-glucosyl-(1&lt;-&gt;1)-ceramide(d18:1(4E)) to produce globotriaosylceramide/globoside Gb3Cer (d18:1(4E)). Also able to transfer galactose to galactosylceramide/beta-D-Gal-(1&lt;-&gt;1')-Cer. Globoside Gb3Cer is a glycosphingolipid of the globo serie, one of the major types of neutral root structures of glycosphingolipids, that constitute a significant portion of mammalian cell membranes. The sequence is that of Lactosylceramide 4-alpha-galactosyltransferase (A4GALT) from Pongo pygmaeus (Bornean orangutan).